Reading from the N-terminus, the 434-residue chain is Angio-associated migratory cell protein (434 aa).

A disordered region spans residues 1–63; it reads MESESESGAA…EEEEEEGNEE (63 aa). The residue at position 20 (S20) is a Phosphoserine. Positions 39-62 are enriched in acidic residues; sequence DPDDLAQEMEDVDFEEEEEEEGNE. 8 WD repeats span residues 89-129, 132-171, 173-212, 214-254, 258-299, 315-354, 356-395, and 398-433; these read LHSA…LLFE, GHKD…EVWS, EAGD…KTFQ, PNCP…HVLK, GHQG…GVFR, SESN…LRHQ, QHQS…LLTD, and GHTA…QRPD.

It is found in the cell membrane. The protein localises to the cytoplasm. Plays a role in angiogenesis and cell migration. In smooth muscle cell migration, may act through the RhoA pathway. The protein is Angio-associated migratory cell protein (AAMP) of Pongo abelii (Sumatran orangutan).